The primary structure comprises 730 residues: Ribosomal RNA large subunit methyltransferase K/L (730 aa).

In terms of domain architecture, THUMP spans 46–157 (TAYRLCLWSR…RGEAILSLDL (112 aa)).

The protein belongs to the methyltransferase superfamily. RlmKL family.

The protein resides in the cytoplasm. The enzyme catalyses guanosine(2445) in 23S rRNA + S-adenosyl-L-methionine = N(2)-methylguanosine(2445) in 23S rRNA + S-adenosyl-L-homocysteine + H(+). It catalyses the reaction guanosine(2069) in 23S rRNA + S-adenosyl-L-methionine = N(2)-methylguanosine(2069) in 23S rRNA + S-adenosyl-L-homocysteine + H(+). Specifically methylates the guanine in position 2445 (m2G2445) and the guanine in position 2069 (m7G2069) of 23S rRNA. The chain is Ribosomal RNA large subunit methyltransferase K/L from Pseudomonas putida (strain W619).